A 501-amino-acid chain; its full sequence is Dihydrolipoyl dehydrogenase, mitochondrial (501 aa).

A mitochondrion-targeting transit peptide spans 1–31 (MAMANLARRKGYSLLSSETLRYSFSLRSRAF). FAD contacts are provided by residues 67–76 (EKRGALGGTC), Lys85, Gly149, and 178–180 (TGS). Cys76 and Cys81 form a disulfide bridge. NAD(+) is bound by residues 215-222 (GAGYIGLE), Glu238, Val272, and Gly307. FAD-binding positions include Asp348 and 354 to 357 (MLAH). Residue His480 is the Proton acceptor of the active site.

The protein belongs to the class-I pyridine nucleotide-disulfide oxidoreductase family. As to quaternary structure, homodimer. FAD is required as a cofactor.

The protein localises to the mitochondrion matrix. It catalyses the reaction N(6)-[(R)-dihydrolipoyl]-L-lysyl-[protein] + NAD(+) = N(6)-[(R)-lipoyl]-L-lysyl-[protein] + NADH + H(+). Functionally, lipoamide dehydrogenase is a component of the glycine cleavage system as well as of the alpha-ketoacid dehydrogenase complexes. The pyruvate dehydrogenase complex contains multiple copies of three enzymatic components: pyruvate dehydrogenase (E1), dihydrolipoamide acetyltransferase (E2) and lipoamide dehydrogenase (E3). The chain is Dihydrolipoyl dehydrogenase, mitochondrial (LPD) from Pisum sativum (Garden pea).